The chain runs to 498 residues: uncharacterized protein (498 aa).

3 disordered regions span residues 1–48, 99–134, and 190–209; these read MSND…ARPK, NDLH…GNSK, and NSEN…TSSN. A compositionally biased stretch (polar residues) spans 35 to 44; the sequence is ELSTPKQVNQ. Over residues 99 to 110 the composition is skewed to basic and acidic residues; that stretch reads NDLHPLDNDSTR. Polar residues predominate over residues 111-126; sequence TSKTLKNSSEVLTASK.

This is an uncharacterized protein from Schizosaccharomyces pombe (strain 972 / ATCC 24843) (Fission yeast).